We begin with the raw amino-acid sequence, 452 residues long: NAD kinase 2, mitochondrial (452 aa).

Residues 1–50 constitute a mitochondrion transit peptide; the sequence is MTCYRGFLLGSCRRVAGGRAALRGSGSGADGRRHLGHGQPRELAGGGSPA. Residues 23-52 form a disordered region; that stretch reads RGSGSGADGRRHLGHGQPRELAGGGSPADG. Residue Lys-64 is modified to N6-acetyllysine; alternate. Position 64 is an N6-succinyllysine; alternate (Lys-64). Position 176 is a phosphoserine (Ser-176). Lys-312 bears the N6-succinyllysine mark. Residue Lys-327 is modified to N6-acetyllysine; alternate. Lys-327 carries the post-translational modification N6-succinyllysine; alternate. Ser-377 carries the post-translational modification Phosphoserine. Residue Lys-407 is modified to N6-acetyllysine.

Belongs to the NAD kinase family. In terms of assembly, homodimer.

It localises to the mitochondrion. It catalyses the reaction NAD(+) + ATP = ADP + NADP(+) + H(+). With respect to regulation, inhibited by NADH, NADPH and NADP(+). Functionally, mitochondrial NAD(+) kinase that phosphorylates NAD(+) to yield NADP(+). Can use both ATP or inorganic polyphosphate as the phosphoryl donor. This chain is NAD kinase 2, mitochondrial (Nadk2), found in Mus musculus (Mouse).